The primary structure comprises 238 residues: tRNA (guanine-N(7)-)-methyltransferase (238 aa).

S-adenosyl-L-methionine is bound by residues Glu70, Asp95, Asp122, and Asp145. Asp145 is a catalytic residue. Substrate contacts are provided by residues Lys149, Asp181, and 216–219 (TKFE).

It belongs to the class I-like SAM-binding methyltransferase superfamily. TrmB family.

It catalyses the reaction guanosine(46) in tRNA + S-adenosyl-L-methionine = N(7)-methylguanosine(46) in tRNA + S-adenosyl-L-homocysteine. The protein operates within tRNA modification; N(7)-methylguanine-tRNA biosynthesis. In terms of biological role, catalyzes the formation of N(7)-methylguanine at position 46 (m7G46) in tRNA. This Neisseria meningitidis serogroup C / serotype 2a (strain ATCC 700532 / DSM 15464 / FAM18) protein is tRNA (guanine-N(7)-)-methyltransferase.